The following is a 1105-amino-acid chain: Ran-binding protein 6 (1105 aa).

Alanine 2 bears the N-acetylalanine mark. 7 HEAT repeats span residues 219–257 (FKDF…TVPK), 361–399 (KVVL…GCHQ), 402–440 (EPIL…DFAP), 444–483 (KKFH…DCPK), 866–905 (LPWF…HCSP), 908–946 (FKYV…FGGD), and 949–987 (RSLC…IGKI).

Belongs to the importin beta family.

The protein localises to the cytoplasm. The protein resides in the nucleus. Functionally, may function in nuclear protein import as nuclear transport receptor. This chain is Ran-binding protein 6 (Ranbp6), found in Mus musculus (Mouse).